We begin with the raw amino-acid sequence, 471 residues long: Glutamate--tRNA ligase (471 aa).

Positions 9-19 (PSPTGYLHVGG) match the 'HIGH' region motif. Zn(2+)-binding residues include Cys-98, Cys-100, Cys-125, and His-127. The 'KMSKS' region motif lies at 237–241 (KLSKR). Residue Lys-240 participates in ATP binding.

Belongs to the class-I aminoacyl-tRNA synthetase family. Glutamate--tRNA ligase type 1 subfamily. In terms of assembly, monomer. It depends on Zn(2+) as a cofactor.

It localises to the cytoplasm. It carries out the reaction tRNA(Glu) + L-glutamate + ATP = L-glutamyl-tRNA(Glu) + AMP + diphosphate. Functionally, catalyzes the attachment of glutamate to tRNA(Glu) in a two-step reaction: glutamate is first activated by ATP to form Glu-AMP and then transferred to the acceptor end of tRNA(Glu). The chain is Glutamate--tRNA ligase from Escherichia coli (strain SMS-3-5 / SECEC).